Reading from the N-terminus, the 384-residue chain is Succinyl-diaminopimelate desuccinylase (384 aa).

H69 contacts Zn(2+). D71 is a catalytic residue. D103 is a binding site for Zn(2+). E137 serves as the catalytic Proton acceptor. Residues E138, E166, and H355 each coordinate Zn(2+).

Belongs to the peptidase M20A family. DapE subfamily. In terms of assembly, homodimer. Zn(2+) serves as cofactor. Co(2+) is required as a cofactor.

The catalysed reaction is N-succinyl-(2S,6S)-2,6-diaminopimelate + H2O = (2S,6S)-2,6-diaminopimelate + succinate. Its pathway is amino-acid biosynthesis; L-lysine biosynthesis via DAP pathway; LL-2,6-diaminopimelate from (S)-tetrahydrodipicolinate (succinylase route): step 3/3. Catalyzes the hydrolysis of N-succinyl-L,L-diaminopimelic acid (SDAP), forming succinate and LL-2,6-diaminopimelate (DAP), an intermediate involved in the bacterial biosynthesis of lysine and meso-diaminopimelic acid, an essential component of bacterial cell walls. The polypeptide is Succinyl-diaminopimelate desuccinylase (Rickettsia canadensis (strain McKiel)).